The chain runs to 364 residues: Fructose-bisphosphate aldolase B (364 aa).

Alanine 2 carries the N-acetylalanine modification. An N6-succinyllysine modification is found at lysine 13. Position 36 is a phosphoserine (serine 36). Position 39 is a phosphothreonine (threonine 39). A beta-D-fructose 1,6-bisphosphate-binding site is contributed by arginine 43. Residue serine 89 is modified to Phosphoserine. Residue threonine 119 is modified to Phosphothreonine. At lysine 121 the chain carries N6-succinyllysine. Position 132 is a phosphoserine (serine 132). Glutamate 188 serves as the catalytic Proton acceptor. The active-site Schiff-base intermediate with dihydroxyacetone-P is the lysine 230. Phosphoserine occurs at positions 272, 276, 299, and 301. 272-274 (SGG) contributes to the beta-D-fructose 1,6-bisphosphate binding site. Arginine 304 is a beta-D-fructose 1,6-bisphosphate binding site. Phosphoserine is present on serine 309. At lysine 317 the chain carries N6-succinyllysine.

The protein belongs to the class I fructose-bisphosphate aldolase family. In terms of assembly, homotetramer. Interacts with BBS1, BBS2, BBS4 and BBS7. Forms a ternary complex with G6PD and TP53; this interaction is direct.

The protein resides in the cytoplasm. Its subcellular location is the cytosol. The protein localises to the cytoskeleton. It localises to the microtubule organizing center. It is found in the centrosome. The protein resides in the centriolar satellite. It catalyses the reaction beta-D-fructose 1,6-bisphosphate = D-glyceraldehyde 3-phosphate + dihydroxyacetone phosphate. The catalysed reaction is beta-D-fructose 1-phosphate = D-glyceraldehyde + dihydroxyacetone phosphate. The protein operates within carbohydrate degradation; glycolysis; D-glyceraldehyde 3-phosphate and glycerone phosphate from D-glucose: step 4/4. It functions in the pathway carbohydrate biosynthesis; gluconeogenesis. Its pathway is carbohydrate metabolism; fructose metabolism. Catalyzes the aldol cleavage of fructose 1,6-biphosphate to form two triosephosphates dihydroxyacetone phosphate and D-glyceraldehyde 3-phosphate in glycolysis as well as the reverse stereospecific aldol addition reaction in gluconeogenesis. In fructolysis, metabolizes fructose 1-phosphate derived from the phosphorylation of dietary fructose by fructokinase into dihydroxyacetone phosphate and D-glyceraldehyde. Acts as an adapter independently of its enzymatic activity, exerts a tumor suppressor role by stabilizing the ternary complex with G6PD and TP53 to inhibit G6PD activity and keep oxidative pentose phosphate metabolism in check. The sequence is that of Fructose-bisphosphate aldolase B (ALDOB) from Pongo abelii (Sumatran orangutan).